The chain runs to 235 residues: Cobalt transport protein CbiM (235 aa).

6 helical membrane-spanning segments follow: residues Gly-6–His-26, Leu-43–Val-63, Met-85–Ile-105, Leu-108–Val-128, Leu-133–Tyr-153, and Ile-181–Phe-201.

The protein belongs to the CbiM family. Forms an energy-coupling factor (ECF) transporter complex composed of an ATP-binding protein (A component, CbiO), a transmembrane protein (T component, CbiQ) and 2 possible substrate-capture proteins (S components, CbiM and CbiN) of unknown stoichimetry.

The protein resides in the cell membrane. It functions in the pathway cofactor biosynthesis; adenosylcobalamin biosynthesis. In terms of biological role, part of the energy-coupling factor (ECF) transporter complex CbiMNOQ involved in cobalt import. In Propionibacterium freudenreichii subsp. shermanii (strain ATCC 9614 / DSM 4902 / CIP 103027 / NCIMB 8099 / CIRM-BIA1), this protein is Cobalt transport protein CbiM.